A 507-amino-acid chain; its full sequence is Maturase K (507 aa).

It belongs to the intron maturase 2 family. MatK subfamily.

The protein resides in the plastid. The protein localises to the chloroplast. Usually encoded in the trnK tRNA gene intron. Probably assists in splicing its own and other chloroplast group II introns. This chain is Maturase K, found in Fagopyrum esculentum (Common buckwheat).